The primary structure comprises 264 residues: Major prion protein (264 aa).

Positions 1 to 24 (MVKSHIGSWILVLFVAMWSDVGLC) are cleaved as a signal peptide. An interaction with GRB2, ERI3 and SYN1 region spans residues 25–241 (KKRPKPGGGW…ESEAYYQRGA (217 aa)). A disordered region spans residues 28–118 (PKPGGGWNTG…QWNKPSKPKT (91 aa)). Tandem repeats lie at residues 54 to 62 (SQGGGGWGQ), 63 to 70 (PHGGGWGQ), 71 to 78 (PHGGGWGQ), 79 to 86 (PHGGGWGQ), 87 to 94 (PHGGGWGQ), and 95 to 103 (PHGGGGWGQ). Residues 54–103 (SQGGGGWGQPHGGGWGQPHGGGWGQPHGGGWGQPHGGGWGQPHGGGGWGQ) are 6 X 8 AA tandem repeats of P-H-G-G-G-W-G-Q. Over residues 55-107 (QGGGGWGQPHGGGWGQPHGGGWGQPHGGGWGQPHGGGWGQPHGGGGWGQGGTH) the composition is skewed to gly residues. Cu(2+) is bound by residues His72, Gly73, Gly74, His80, Gly81, Gly82, His88, Gly89, Gly90, His96, Gly98, and Gly99. A disulfide bridge connects residues Cys190 and Cys225. N-linked (GlcNAc...) asparagine glycans are attached at residues Asn192 and Asn208. Ala241 carries the GPI-anchor amidated alanine lipid modification. Residues 242–264 (SVILFSSPPVILLISFLIFLIVG) constitute a propeptide, removed in mature form.

The protein belongs to the prion family. In terms of assembly, monomer and homodimer. Has a tendency to aggregate into amyloid fibrils containing a cross-beta spine, formed by a steric zipper of superposed beta-strands. Soluble oligomers may represent an intermediate stage on the path to fibril formation. Copper binding may promote oligomerization. Interacts with GRB2, APP, ERI3/PRNPIP and SYN1. Mislocalized cytosolically exposed PrP interacts with MGRN1; this interaction alters MGRN1 subcellular location and causes lysosomal enlargement. Interacts with KIAA1191.

The protein resides in the cell membrane. Its subcellular location is the golgi apparatus. Functionally, its primary physiological function is unclear. Has cytoprotective activity against internal or environmental stresses. May play a role in neuronal development and synaptic plasticity. May be required for neuronal myelin sheath maintenance. May play a role in iron uptake and iron homeostasis. Soluble oligomers are toxic to cultured neuroblastoma cells and induce apoptosis (in vitro). Association with GPC1 (via its heparan sulfate chains) targets PRNP to lipid rafts. Also provides Cu(2+) or Zn(2+) for the ascorbate-mediated GPC1 deaminase degradation of its heparan sulfate side chains. The sequence is that of Major prion protein (PRNP) from Tragelaphus imberbis (Lesser kudu).